A 302-amino-acid polypeptide reads, in one-letter code: Mitochondrial glycine transporter (302 aa).

Solcar repeat units follow at residues 22–112 (HPVF…LKHH), 119–203 (PKPL…AKKL), and 213–297 (FSPV…MMEK). Helical transmembrane passes span 28–53 (FVCG…TRLQ), 87–113 (GVSP…KHHF), 125–150 (VMLG…TRYE), 178–201 (GLTA…TRAK), 217–243 (LNFG…KTHI), and 272–290 (GGLP…AWTV).

The protein belongs to the mitochondrial carrier (TC 2.A.29) family. SLC25A38 subfamily.

The protein localises to the mitochondrion inner membrane. The enzyme catalyses glycine(in) = glycine(out). Functionally, mitochondrial glycine transporter that imports glycine into the mitochondrial matrix. Plays an important role in providing glycine for the first enzymatic step in heme biosynthesis, the condensation of glycine with succinyl-CoA to produce 5-aminolevulinate (ALA) in the mitochondrial matrix. Required during erythropoiesis. In terms of biological role, may play a role as pro-apoptotic protein that induces caspase-dependent apoptosis. The sequence is that of Mitochondrial glycine transporter from Xenopus tropicalis (Western clawed frog).